The following is a 356-amino-acid chain: Pyruvate dehydrogenase E1 component subunit beta, mitochondrial (356 aa).

Residues 1 to 25 (MLSSILKKIQPSLLVNFRIITRTYA) constitute a mitochondrion transit peptide. E85 provides a ligand contact to thiamine diphosphate. Positions 138, 186, 187, 189, and 191 each coordinate K(+).

As to quaternary structure, tetramer of 2 alpha and 2 beta subunits. Thiamine diphosphate serves as cofactor.

It localises to the mitochondrion matrix. The enzyme catalyses N(6)-[(R)-lipoyl]-L-lysyl-[protein] + pyruvate + H(+) = N(6)-[(R)-S(8)-acetyldihydrolipoyl]-L-lysyl-[protein] + CO2. In terms of biological role, the pyruvate dehydrogenase complex catalyzes the overall conversion of pyruvate to acetyl-CoA and CO(2). It contains multiple copies of three enzymatic components: pyruvate dehydrogenase (E1), dihydrolipoamide acetyltransferase (E2) and lipoamide dehydrogenase (E3). The sequence is that of Pyruvate dehydrogenase E1 component subunit beta, mitochondrial (pdhB) from Dictyostelium discoideum (Social amoeba).